A 272-amino-acid chain; its full sequence is Glutamate racemase (272 aa).

Substrate contacts are provided by residues 16–17 (DS) and 48–49 (YG). The active-site Proton donor/acceptor is C79. 80–81 (NT) provides a ligand contact to substrate. Catalysis depends on C191, which acts as the Proton donor/acceptor. Residue 192 to 193 (TH) coordinates substrate.

This sequence belongs to the aspartate/glutamate racemases family.

The enzyme catalyses L-glutamate = D-glutamate. Its pathway is cell wall biogenesis; peptidoglycan biosynthesis. In terms of biological role, provides the (R)-glutamate required for cell wall biosynthesis. In Chlorobaculum tepidum (strain ATCC 49652 / DSM 12025 / NBRC 103806 / TLS) (Chlorobium tepidum), this protein is Glutamate racemase.